The primary structure comprises 570 residues: Pyruvate decarboxylase (570 aa).

The propeptide at 1 to 2 (MV) is removed in mature form. Substrate-binding residues include Asp33 and His120. Positions 394–476 (DSWFNGIQLK…MLINNRGYTI (83 aa)) are thiamine pyrophosphate binding. Asp444, Asn471, and Gly473 together coordinate Mg(2+). Glu477 is a substrate binding site.

It belongs to the TPP enzyme family. Homomer. The cofactor is a metal cation. Thiamine diphosphate serves as cofactor.

It localises to the cytoplasm. The enzyme catalyses a 2-oxocarboxylate + H(+) = an aldehyde + CO2. It participates in carbohydrate metabolism; pyruvate metabolism. In Neurospora crassa (strain ATCC 24698 / 74-OR23-1A / CBS 708.71 / DSM 1257 / FGSC 987), this protein is Pyruvate decarboxylase (cfp).